Consider the following 237-residue polypeptide: Uracil-DNA glycosylase (237 aa).

Catalysis depends on D77, which acts as the Proton acceptor.

It belongs to the uracil-DNA glycosylase (UDG) superfamily. UNG family.

It is found in the cytoplasm. The enzyme catalyses Hydrolyzes single-stranded DNA or mismatched double-stranded DNA and polynucleotides, releasing free uracil.. In terms of biological role, excises uracil residues from the DNA which can arise as a result of misincorporation of dUMP residues by DNA polymerase or due to deamination of cytosine. In Acinetobacter baumannii (strain AB307-0294), this protein is Uracil-DNA glycosylase.